A 417-amino-acid polypeptide reads, in one-letter code: Peptide chain release factor subunit 1 (417 aa).

It belongs to the eukaryotic release factor 1 family. As to quaternary structure, heterodimer of two subunits, one of which binds GTP.

The protein localises to the cytoplasm. In terms of biological role, directs the termination of nascent peptide synthesis (translation) in response to the termination codons UAA, UAG and UGA. This Thermoplasma acidophilum (strain ATCC 25905 / DSM 1728 / JCM 9062 / NBRC 15155 / AMRC-C165) protein is Peptide chain release factor subunit 1 (prf1).